The sequence spans 554 residues: MTPLIFVTGGVVSSLGKGIAAASLAAILEARGLKVTMMKLDPYINVDPGTMSPFQHGEVYVTDDGAETDLDLGHYERFVRTRLSRKNSVTTGRIYENVIRKERRGDYLGATVQVIPHITDEIRRCIDEATEGYDVALVEIGGTVGDIESLPFLEAIRQVRTERGPEKALFMHLTLVPYIGAAGELKTKPTQHSVKELRSIGIQPDVLLCRSEQAVPDSERRKIAQFTNVSERAVISVPDVDVLYRIPSGLHAQGLDEIVVNQLKLADKVGPVDLSMWEDAVDATLHPLDEVTIAVVGKYVDHQDAYKSVGEALKHGGLRQRTKVNLKWLEAQDLEGTDMAALADVDGILVPGGFGDRGFEGKVLTSKFAREQQVPYFGICYGMQAAVVDYARNVVGLEGANSTENDRQSPNPVIGLITEWRTATGDVEKRDDKSDLGGTMRLGLQEQRLKPGTLARELYGKDVVAERHRHRYEFNNRYRTQLEDAGLVIAGKSMDDTLVEVVELPRDAHPWFLACQAHPEFLSTPRDGHPLFIGFIRAARERKAGGKLLQEVRA.

Residues 1 to 265 form an amidoligase domain region; sequence MTPLIFVTGG…DEIVVNQLKL (265 aa). Residue serine 13 participates in CTP binding. Serine 13 lines the UTP pocket. ATP-binding positions include 14 to 19 and aspartate 71; that span reads SLGKGI. Mg(2+)-binding residues include aspartate 71 and glutamate 139. CTP contacts are provided by residues 146–148, 186–191, and lysine 222; these read DIE and KTKPTQ. Residues 186 to 191 and lysine 222 each bind UTP; that span reads KTKPTQ. Positions 292 to 545 constitute a Glutamine amidotransferase type-1 domain; that stretch reads TIAVVGKYVD…IRAARERKAG (254 aa). Glycine 353 serves as a coordination point for L-glutamine. Residue cysteine 380 is the Nucleophile; for glutamine hydrolysis of the active site. L-glutamine is bound by residues 381 to 384, glutamate 404, and arginine 471; that span reads YGMQ. Active-site residues include histidine 518 and glutamate 520.

Belongs to the CTP synthase family. Homotetramer.

The enzyme catalyses UTP + L-glutamine + ATP + H2O = CTP + L-glutamate + ADP + phosphate + 2 H(+). It carries out the reaction L-glutamine + H2O = L-glutamate + NH4(+). It catalyses the reaction UTP + NH4(+) + ATP = CTP + ADP + phosphate + 2 H(+). The protein operates within pyrimidine metabolism; CTP biosynthesis via de novo pathway; CTP from UDP: step 2/2. Allosterically activated by GTP, when glutamine is the substrate; GTP has no effect on the reaction when ammonia is the substrate. The allosteric effector GTP functions by stabilizing the protein conformation that binds the tetrahedral intermediate(s) formed during glutamine hydrolysis. Inhibited by the product CTP, via allosteric rather than competitive inhibition. In terms of biological role, catalyzes the ATP-dependent amination of UTP to CTP with either L-glutamine or ammonia as the source of nitrogen. Regulates intracellular CTP levels through interactions with the four ribonucleotide triphosphates. The chain is CTP synthase from Stenotrophomonas maltophilia (strain R551-3).